Consider the following 306-residue polypeptide: D-alanine--D-alanine ligase B (306 aa).

Catalysis depends on residues Glu-15 and Ser-150. Residues 101-303 (KLLWQGAGLP…FSQLVVRILE (203 aa)) enclose the ATP-grasp domain. 134 to 189 (ISALGLPVIVKPSREGSSVGMSKVVAENALQDALRLAFQHDEEVLIEKWLSGPEFT) is a binding site for ATP. Mg(2+)-binding residues include Asp-257, Glu-270, and Asn-272. The active site involves Ser-281.

The protein belongs to the D-alanine--D-alanine ligase family. As to quaternary structure, monomer. Mg(2+) serves as cofactor. The cofactor is Mn(2+).

The protein localises to the cytoplasm. It catalyses the reaction 2 D-alanine + ATP = D-alanyl-D-alanine + ADP + phosphate + H(+). Its pathway is cell wall biogenesis; peptidoglycan biosynthesis. In terms of biological role, cell wall formation. This chain is D-alanine--D-alanine ligase B (ddlB), found in Escherichia coli (strain K12).